We begin with the raw amino-acid sequence, 665 residues long: Macrolide export ATP-binding/permease protein MacB (665 aa).

The ABC transporter domain occupies 17-255 (MQVKGLIREF…AAQPASIIDK (239 aa)). 53–60 (GQSGSGKS) is a binding site for ATP. Transmembrane regions (helical) follow at residues 287–307 (LLTM…VGLG), 544–564 (IAII…LVSV), 588–608 (FLIE…GLAF), and 630–650 (SIIA…FLPA).

Belongs to the ABC transporter superfamily. Macrolide exporter (TC 3.A.1.122) family. Homodimer. Part of the tripartite efflux system MacAB-TolC, which is composed of an inner membrane transporter, MacB, a periplasmic membrane fusion protein, MacA, and an outer membrane component, TolC. The complex forms a large protein conduit and can translocate molecules across both the inner and outer membranes. Interacts with MacA.

It localises to the cell inner membrane. Functionally, part of the tripartite efflux system MacAB-TolC. MacB is a non-canonical ABC transporter that contains transmembrane domains (TMD), which form a pore in the inner membrane, and an ATP-binding domain (NBD), which is responsible for energy generation. Confers resistance against macrolides. This is Macrolide export ATP-binding/permease protein MacB from Psychrobacter cryohalolentis (strain ATCC BAA-1226 / DSM 17306 / VKM B-2378 / K5).